The chain runs to 475 residues: ATP synthase subunit beta, chloroplastic (475 aa).

ATP is bound at residue 156 to 163 (GGAGVGKT).

The protein belongs to the ATPase alpha/beta chains family. As to quaternary structure, F-type ATPases have 2 components, CF(1) - the catalytic core - and CF(0) - the membrane proton channel. CF(1) has five subunits: alpha(3), beta(3), gamma(1), delta(1), epsilon(1). CF(0) has four main subunits: a(1), b(1), b'(1) and c(9-12).

Its subcellular location is the plastid. The protein localises to the chloroplast thylakoid membrane. The enzyme catalyses ATP + H2O + 4 H(+)(in) = ADP + phosphate + 5 H(+)(out). In terms of biological role, produces ATP from ADP in the presence of a proton gradient across the membrane. The catalytic sites are hosted primarily by the beta subunits. In Trieres chinensis (Marine centric diatom), this protein is ATP synthase subunit beta, chloroplastic.